Here is a 710-residue protein sequence, read N- to C-terminus: Homeobox-leucine zipper protein ROC8 (710 aa).

Residues 1 to 23 (MDFGDEPEGSDSQRRRKRYHRHT) form a disordered region. The segment covering 14 to 23 (RRRKRYHRHT) has biased composition (basic residues). The homeobox DNA-binding region spans 15–74 (RRKRYHRHTPRQIQQLEAMFKECPHPDENQRAQLSRELGLEPRQIKFWFQNRRTQMKAQH). Residues 82 to 144 (LRAENDKIRC…DRVSNLTSKY (63 aa)) are a coiled coil. An START domain is found at 197-440 (SDMERPMMAE…LQRACERYAS (244 aa)). A compositionally biased stretch (low complexity) spans 630-648 (RPGSAAGASTSSAGPLAAA). Residues 630–650 (RPGSAAGASTSSAGPLAAARG) are disordered.

This sequence belongs to the HD-ZIP homeobox family. Class IV subfamily.

It is found in the nucleus. Functionally, probable transcription factor. This Oryza sativa subsp. japonica (Rice) protein is Homeobox-leucine zipper protein ROC8 (ROC8).